Consider the following 479-residue polypeptide: Aspartyl/glutamyl-tRNA(Asn/Gln) amidotransferase subunit B (479 aa).

This sequence belongs to the GatB/GatE family. GatB subfamily. As to quaternary structure, heterotrimer of A, B and C subunits.

It catalyses the reaction L-glutamyl-tRNA(Gln) + L-glutamine + ATP + H2O = L-glutaminyl-tRNA(Gln) + L-glutamate + ADP + phosphate + H(+). It carries out the reaction L-aspartyl-tRNA(Asn) + L-glutamine + ATP + H2O = L-asparaginyl-tRNA(Asn) + L-glutamate + ADP + phosphate + 2 H(+). Functionally, allows the formation of correctly charged Asn-tRNA(Asn) or Gln-tRNA(Gln) through the transamidation of misacylated Asp-tRNA(Asn) or Glu-tRNA(Gln) in organisms which lack either or both of asparaginyl-tRNA or glutaminyl-tRNA synthetases. The reaction takes place in the presence of glutamine and ATP through an activated phospho-Asp-tRNA(Asn) or phospho-Glu-tRNA(Gln). In Deinococcus radiodurans (strain ATCC 13939 / DSM 20539 / JCM 16871 / CCUG 27074 / LMG 4051 / NBRC 15346 / NCIMB 9279 / VKM B-1422 / R1), this protein is Aspartyl/glutamyl-tRNA(Asn/Gln) amidotransferase subunit B.